Consider the following 448-residue polypeptide: UDP-N-acetylmuramoylalanine--D-glutamate ligase (448 aa).

Position 116 to 122 (116 to 122 (GSNAKST)) interacts with ATP.

It belongs to the MurCDEF family.

The protein localises to the cytoplasm. The enzyme catalyses UDP-N-acetyl-alpha-D-muramoyl-L-alanine + D-glutamate + ATP = UDP-N-acetyl-alpha-D-muramoyl-L-alanyl-D-glutamate + ADP + phosphate + H(+). The protein operates within cell wall biogenesis; peptidoglycan biosynthesis. Cell wall formation. Catalyzes the addition of glutamate to the nucleotide precursor UDP-N-acetylmuramoyl-L-alanine (UMA). The sequence is that of UDP-N-acetylmuramoylalanine--D-glutamate ligase from Pseudomonas fluorescens (strain ATCC BAA-477 / NRRL B-23932 / Pf-5).